Consider the following 505-residue polypeptide: MAQKDNQKEMNDQLKVRREKMQFLKDEGIDPFGSRFERTHLAAALHEEFEAIEKDDLDVKNQEVTIAGRMMSKRGKGKVGFADIRDRSGKIQIYVRKDEVGEDNYKIFKKADLGDHLGITGQIMKTDMGELTVKATHLTFLSKALRPLPDKYHGLTNVEQIYRQRYLDLIANPESMDRFTKRSKIISAVREYLDTHDFTEVETPVLHGQAGGASARPFITHHNALDINLYLRIALELHLKRLIVGGMERVYEIGRVFRNEGIDTKHNPEFTMLETYAAYFDYKDVMDETEGIIRFAAHKVLGTGQISYQGQAIDLDSDFARVHMVDAIKAETGVDFWQPMTVESARELADQHHVKYEEYWQVGHIINAFFEEFVEDTLVQPTFIYGHPVEISPLAKKNAEDDRFTDRWELFMHGNEYANAFTELNDPIDQRERFEAQAKERENGNDEAEGIDEDYVEALEYGMPPTGGLGIGIDRLVMLLTDAASIRDVLLFPTMRPDKQENEEI.

Residues glutamate 409 and glutamate 416 each contribute to the Mg(2+) site.

The protein belongs to the class-II aminoacyl-tRNA synthetase family. In terms of assembly, homodimer. Mg(2+) serves as cofactor.

It localises to the cytoplasm. The catalysed reaction is tRNA(Lys) + L-lysine + ATP = L-lysyl-tRNA(Lys) + AMP + diphosphate. This is Lysine--tRNA ligase from Latilactobacillus sakei subsp. sakei (strain 23K) (Lactobacillus sakei subsp. sakei).